Consider the following 319-residue polypeptide: Ferrochelatase (319 aa).

Positions 193 and 274 each coordinate Fe cation.

Belongs to the ferrochelatase family.

It is found in the cytoplasm. The catalysed reaction is heme b + 2 H(+) = protoporphyrin IX + Fe(2+). Its pathway is porphyrin-containing compound metabolism; protoheme biosynthesis; protoheme from protoporphyrin-IX: step 1/1. Its function is as follows. Catalyzes the ferrous insertion into protoporphyrin IX. This is Ferrochelatase from Actinobacillus pleuropneumoniae serotype 5b (strain L20).